The chain runs to 185 residues: Elongation factor P (185 aa).

Belongs to the elongation factor P family.

Its subcellular location is the cytoplasm. The protein operates within protein biosynthesis; polypeptide chain elongation. In terms of biological role, involved in peptide bond synthesis. Stimulates efficient translation and peptide-bond synthesis on native or reconstituted 70S ribosomes in vitro. Probably functions indirectly by altering the affinity of the ribosome for aminoacyl-tRNA, thus increasing their reactivity as acceptors for peptidyl transferase. The sequence is that of Elongation factor P from Lachnoclostridium phytofermentans (strain ATCC 700394 / DSM 18823 / ISDg) (Clostridium phytofermentans).